The primary structure comprises 387 residues: Phosphoglycerate kinase (387 aa).

Substrate contacts are provided by residues 21–23, Arg-36, 59–62, Arg-113, and Arg-146; these read DLN and HLGR. ATP-binding positions include Lys-197, Glu-314, and 340–343; that span reads GGDT.

Belongs to the phosphoglycerate kinase family. Monomer.

The protein resides in the cytoplasm. The catalysed reaction is (2R)-3-phosphoglycerate + ATP = (2R)-3-phospho-glyceroyl phosphate + ADP. It functions in the pathway carbohydrate degradation; glycolysis; pyruvate from D-glyceraldehyde 3-phosphate: step 2/5. The sequence is that of Phosphoglycerate kinase from Pseudomonas fluorescens (strain SBW25).